The primary structure comprises 227 residues: Cytochrome c oxidase subunit 2 (227 aa).

Topologically, residues 1-14 (MAYPFQLGLQDATS) are mitochondrial intermembrane. The chain crosses the membrane as a helical span at residues 15 to 45 (PIMEELTNFHDHTLMIVFLISSLVLYIISSM). The Mitochondrial matrix portion of the chain corresponds to 46–59 (LATKMTHTSTMDAQ). A helical membrane pass occupies residues 60 to 87 (SMETIWTILPAVILVLIALPSLRILYMM). At 88–227 (DEINNPVLTV…FFENWSASMI (140 aa)) the chain is on the mitochondrial intermembrane side. Residues histidine 161, cysteine 196, glutamate 198, cysteine 200, histidine 204, and methionine 207 each coordinate Cu cation. Residue glutamate 198 participates in Mg(2+) binding.

Belongs to the cytochrome c oxidase subunit 2 family. As to quaternary structure, component of the cytochrome c oxidase (complex IV, CIV), a multisubunit enzyme composed of 14 subunits. The complex is composed of a catalytic core of 3 subunits MT-CO1, MT-CO2 and MT-CO3, encoded in the mitochondrial DNA, and 11 supernumerary subunits COX4I, COX5A, COX5B, COX6A, COX6B, COX6C, COX7A, COX7B, COX7C, COX8 and NDUFA4, which are encoded in the nuclear genome. The complex exists as a monomer or a dimer and forms supercomplexes (SCs) in the inner mitochondrial membrane with NADH-ubiquinone oxidoreductase (complex I, CI) and ubiquinol-cytochrome c oxidoreductase (cytochrome b-c1 complex, complex III, CIII), resulting in different assemblies (supercomplex SCI(1)III(2)IV(1) and megacomplex MCI(2)III(2)IV(2)). Found in a complex with TMEM177, COA6, COX18, COX20, SCO1 and SCO2. Interacts with TMEM177 in a COX20-dependent manner. Interacts with COX20. Interacts with COX16. Cu cation is required as a cofactor.

It is found in the mitochondrion inner membrane. It carries out the reaction 4 Fe(II)-[cytochrome c] + O2 + 8 H(+)(in) = 4 Fe(III)-[cytochrome c] + 2 H2O + 4 H(+)(out). Functionally, component of the cytochrome c oxidase, the last enzyme in the mitochondrial electron transport chain which drives oxidative phosphorylation. The respiratory chain contains 3 multisubunit complexes succinate dehydrogenase (complex II, CII), ubiquinol-cytochrome c oxidoreductase (cytochrome b-c1 complex, complex III, CIII) and cytochrome c oxidase (complex IV, CIV), that cooperate to transfer electrons derived from NADH and succinate to molecular oxygen, creating an electrochemical gradient over the inner membrane that drives transmembrane transport and the ATP synthase. Cytochrome c oxidase is the component of the respiratory chain that catalyzes the reduction of oxygen to water. Electrons originating from reduced cytochrome c in the intermembrane space (IMS) are transferred via the dinuclear copper A center (CU(A)) of subunit 2 and heme A of subunit 1 to the active site in subunit 1, a binuclear center (BNC) formed by heme A3 and copper B (CU(B)). The BNC reduces molecular oxygen to 2 water molecules using 4 electrons from cytochrome c in the IMS and 4 protons from the mitochondrial matrix. The chain is Cytochrome c oxidase subunit 2 (MT-CO2) from Acomys wilsoni (Wilson's spiny mouse).